Consider the following 110-residue polypeptide: UPF0473 protein SSP1146 (110 aa).

The protein belongs to the UPF0473 family.

This chain is UPF0473 protein SSP1146, found in Staphylococcus saprophyticus subsp. saprophyticus (strain ATCC 15305 / DSM 20229 / NCIMB 8711 / NCTC 7292 / S-41).